The chain runs to 243 residues: Protein HUA2 (243 aa).

The protein resides in the cytoplasm. Functionally, may have a role in actin patch assembly. In Saccharomyces cerevisiae (strain ATCC 204508 / S288c) (Baker's yeast), this protein is Protein HUA2 (HUA2).